The sequence spans 782 residues: MMDLEPQESLTAPTAPAIGATAVMEKDKSLLIPQDAPVEQNLGYETPPEEFEGFLQIQKQPNEQNAGLEDHDYLNEGDVLFKHLQRQSTIVRDAISDRSSIPVSIAELSCIYERNLFSPRVPPKRQANGTCEPNPRLNFYPVFAVPEALATYHIFFKNHKIPLSCRANRSRADELLALRAGASIPGIVSLEEVPKIFEGLGRDEKRAANALQKENEQNHHGNSALIELEGDNARLAVLKRNIEVTHFAYPAVNLPPKVMSAVMNQLLIKRAQPIDKDANLQDPEATDDGKPVVSDEQLTKWLGTDNSNELQQRRKLMMAAVLVTVELECMHRFFSDITTLRKIEECLHYTFRHGYVRQACKISNVELSNLVSYMGILHENRLGQNVLHSTLRDEARRDYVRDCIYLFLLHTWQTGMGVWQQCLEEKNLRELNKLLDRALKSLWTGFDERTVAAELADIIFPERLMITLQNGLPDFMSQSMLHNYRSFILERSGMLPSMCCALPSDFVPIYFRECPPPLWSHCYLLRLANYLAYHSDLMTDSSGEGLMECHCRCNLCTPHRSLVCNTELLSESQVIGTFEMQGPQSDSNFTTNLRLTPGLWTSAYLRKFEPQDYHAHSINFYEDQSKPPKAPLTACVITQGKILAQLHAIKQAREEFLLKKGHGVYLDPQTGEELNLPSPLCATASPHSQHVPESRKTGYCAATLKETAATAGNLGGRILGESGRGRGRGLGRMGGGGGGQPRRGSRGGGGRFQGRSDRRQTVAFNQALSNETRCEQISESQP.

Residues 262-329 (VMNQLLIKRA…AVLVTVELEC (68 aa)) form a binding to host EIF4G region. Residues 332-450 (RFFSDITTLR…SLWTGFDERT (119 aa)) form the RRM domain. 2 positions are modified to phosphotyrosine; by host: Tyr-349 and Tyr-665. The interval 715-760 (GGRILGESGRGRGRGLGRMGGGGGGQPRRGSRGGGGRFQGRSDRRQ) is disordered. A compositionally biased stretch (gly residues) spans 728–752 (RGLGRMGGGGGGQPRRGSRGGGGRF).

Belongs to the adenoviridae shutoff protein family. In terms of assembly, monomer. Interacts with hexon protein; this interaction allows chaperoning and trimerization of hexon proteins. Interacts (via N-terminus) with host initiation factor EIF4G (via C-terminus). Interacts (via RRM domain) with viral mRNAs that contain the tripartite leader; this interaction allows ribosome shunting and expression of viral late mRNAs. Might be cleaved by the viral protease. In terms of processing, phosphorylated. Tyrosine phosphorylation enhances preferential binding to tripartite leader mRNAs and allows ribosome shunting. Post-translationally, methylated. Asymmetric dimethylation by host PRMT1 of the Arg/Gly-rich region may regulate shutoff protein binding to hexon and promote the capsid assembly in the nucleus.

It is found in the host cytoplasm. In terms of biological role, protein that inhibits host translation while promoting late viral translation by ribosome shunting. Blocks host cap-dependent translation by binding to eIF4G, displacing MKNK1 from cap initiation complexes and preventing EIF4E phosphorylation. Binds to the tripartite leader sequence of viral late mRNAs and recruits host eIF4G, PABPC1/poly-A binding protein and 40S ribosomes subunits on viral mRNAs, allowing ribosome shunting and efficient translation of late viral mRNAs even though conventional translation via ribosome scanning from the cap has been shut off in the host cell. During assembly, acts as a chaperone protein that helps hexon proteins assembly into trimers. This chain is Shutoff protein, found in Human adenovirus A serotype 12 (HAdV-12).